Here is a 494-residue protein sequence, read N- to C-terminus: Solute carrier family 2, facilitated glucose transporter member 3 (494 aa).

The Cytoplasmic portion of the chain corresponds to 1–10 (MGTTKVTTPL). The helical transmembrane segment at 11-32 (IFAISIATIGSFQFGYNTGVIN) threads the bilayer. The Extracellular portion of the chain corresponds to 33 to 64 (APEAIIKDFLNYTLEERSETPPSSVLLTSLWS). Asn43 carries N-linked (GlcNAc...) asparagine glycosylation. The chain crosses the membrane as a helical span at residues 65–85 (LSVAIFSVGGMIGSFSVGLFV). Residues 86-90 (NRFGR) are Cytoplasmic-facing. The helical transmembrane segment at 91 to 111 (RNSMLIVNLLAIAGGCLMGFC) threads the bilayer. Topologically, residues 112–118 (KIAESVE) are extracellular. A helical transmembrane segment spans residues 119-142 (MLILGRLIIGLFCGLCTGFVPMYI). The Cytoplasmic portion of the chain corresponds to 143 to 153 (GEISPTALRGA). The helical transmembrane segment at 154 to 174 (FGTLNQLGIVIGILVAQIFGL) threads the bilayer. Gln159 is a D-glucose binding site. Over 175–183 (KVILGTEDL) the chain is Extracellular. A helical membrane pass occupies residues 184–204 (WPLLLGFTILPAIIQCAALPF). The Cytoplasmic segment spans residues 205–269 (CPESPRFLLI…LFRAPNYRQP (65 aa)). Thr232 is modified (phosphothreonine). The chain crosses the membrane as a helical span at residues 270 to 290 (IIISIMLQLSQQLSGINAVFY). Residues 277–279 (QLS) are important for selectivity against fructose. Residues 280 to 281 (QQ) and Asn286 contribute to the D-glucose site. Residues 291-304 (YSTGIFKDAGVQEP) lie on the Extracellular side of the membrane. A helical membrane pass occupies residues 305–325 (VYATIGAGVVNTIFTVVSVFL). A D-glucose-binding site is contributed by Asn315. Over 326–331 (VERAGR) the chain is Cytoplasmic. Residues 332–352 (RTLHLIGLGGMAFCSILMTIS) traverse the membrane as a helical segment. The Extracellular portion of the chain corresponds to 353–363 (LLLKDNYSWMS). The helical transmembrane segment at 364–389 (FICIGAILVFVAFFEIGPGPIPWFIV) threads the bilayer. D-glucose-binding residues include Glu378 and Trp386. The Cytoplasmic segment spans residues 390–399 (AELFGQGPRP). A helical transmembrane segment spans residues 400–420 (AAMAVAGCSNWTSNFLVGLLF). Residues 421 to 429 (PSATFYLGA) are Extracellular-facing. A helical transmembrane segment spans residues 430-450 (YVFIVFTVFLVIFWVFTFFKV). The Cytoplasmic portion of the chain corresponds to 451-494 (PETRGRTFEEITRAFEGQVQTGTRGEKGPIMEMNSIQPTKDTNA). Positions 473-494 (TRGEKGPIMEMNSIQPTKDTNA) are disordered. The segment covering 484–494 (NSIQPTKDTNA) has biased composition (polar residues). Phosphoserine is present on Ser485. Residue Thr492 is modified to Phosphothreonine.

It belongs to the major facilitator superfamily. Sugar transporter (TC 2.A.1.1) family. Glucose transporter subfamily. Interacts with SMIM43; the interaction may promote SLC2A3-mediated glucose transport to meet the energy needs of mesendoderm differentiation. As to expression, detected in placenta.

Its subcellular location is the cell membrane. It localises to the perikaryon. The protein localises to the cell projection. It catalyses the reaction D-glucose(out) = D-glucose(in). The catalysed reaction is D-galactose(in) = D-galactose(out). Its activity is regulated as follows. Deoxyglucose transport is inhibited by D-glucose, D-galactose and maltose. Galactose transport is inhibited by D-glucose and maltose. In terms of biological role, facilitative glucose transporter. Can also mediate the uptake of various other monosaccharides across the cell membrane. Mediates the uptake of glucose, 2-deoxyglucose, galactose, mannose, xylose and fucose, and probably also dehydroascorbate. Does not mediate fructose transport. Required for mesendoderm differentiation. The sequence is that of Solute carrier family 2, facilitated glucose transporter member 3 from Ovis aries (Sheep).